We begin with the raw amino-acid sequence, 192 residues long: uncharacterized protein (192 aa).

In terms of domain architecture, Nudix hydrolase spans His29–Ser160. The Nudix box motif lies at Gly67–Ala89. Glu83 and Glu87 together coordinate Mg(2+).

Belongs to the Nudix hydrolase family. PCD1 subfamily. The cofactor is Mn(2+). Mg(2+) serves as cofactor.

Its function is as follows. Probably mediates the hydrolysis of some nucleoside diphosphate derivatives. This is an uncharacterized protein from Escherichia coli (strain SMS-3-5 / SECEC).